We begin with the raw amino-acid sequence, 952 residues long: Protein translocase subunit SecA (952 aa).

ATP contacts are provided by residues Gln-135, 153–157 (GEGKT), and Asp-575. A compositionally biased stretch (basic and acidic residues) spans 614–624 (RHESRRIDNQL). Disordered regions lie at residues 614–636 (RHESRRIDNQLRGRSGRQGDPGS) and 916–946 (VSAKAATQSTTPAAKEIGRNDPCPCGSGKKY). Cys-938, Cys-940, Cys-949, and Cys-950 together coordinate Zn(2+).

This sequence belongs to the SecA family. In terms of assembly, monomer and homodimer. Part of the essential Sec protein translocation apparatus which comprises SecA, SecYEG and auxiliary proteins SecDF. Other proteins may also be involved. Zn(2+) is required as a cofactor.

The protein resides in the cell membrane. Its subcellular location is the cytoplasm. It catalyses the reaction ATP + H2O + cellular proteinSide 1 = ADP + phosphate + cellular proteinSide 2.. In terms of biological role, part of the Sec protein translocase complex. Interacts with the SecYEG preprotein conducting channel. Has a central role in coupling the hydrolysis of ATP to the transfer of proteins into and across the cell membrane, serving as an ATP-driven molecular motor driving the stepwise translocation of polypeptide chains across the membrane. The chain is Protein translocase subunit SecA from Dehalococcoides mccartyi (strain ATCC BAA-2100 / JCM 16839 / KCTC 5957 / BAV1).